A 183-amino-acid chain; its full sequence is UPF0398 protein BLi02355/BL05236 (183 aa).

Belongs to the UPF0398 family.

The sequence is that of UPF0398 protein BLi02355/BL05236 from Bacillus licheniformis (strain ATCC 14580 / DSM 13 / JCM 2505 / CCUG 7422 / NBRC 12200 / NCIMB 9375 / NCTC 10341 / NRRL NRS-1264 / Gibson 46).